A 261-amino-acid polypeptide reads, in one-letter code: Triosephosphate isomerase (261 aa).

Residue 10-12 (NWK) participates in substrate binding. Catalysis depends on His-100, which acts as the Electrophile. Glu-172 functions as the Proton acceptor in the catalytic mechanism. Substrate is bound by residues Gly-178, Ser-218, and 239 to 240 (GG).

It belongs to the triosephosphate isomerase family. As to quaternary structure, homodimer.

The protein localises to the cytoplasm. It carries out the reaction D-glyceraldehyde 3-phosphate = dihydroxyacetone phosphate. It participates in carbohydrate biosynthesis; gluconeogenesis. The protein operates within carbohydrate degradation; glycolysis; D-glyceraldehyde 3-phosphate from glycerone phosphate: step 1/1. Functionally, involved in the gluconeogenesis. Catalyzes stereospecifically the conversion of dihydroxyacetone phosphate (DHAP) to D-glyceraldehyde-3-phosphate (G3P). The chain is Triosephosphate isomerase from Mycobacterium tuberculosis (strain CDC 1551 / Oshkosh).